The primary structure comprises 188 residues: Probable nicotinate-nucleotide adenylyltransferase (188 aa).

This sequence belongs to the NadD family.

It carries out the reaction nicotinate beta-D-ribonucleotide + ATP + H(+) = deamido-NAD(+) + diphosphate. It participates in cofactor biosynthesis; NAD(+) biosynthesis; deamido-NAD(+) from nicotinate D-ribonucleotide: step 1/1. Functionally, catalyzes the reversible adenylation of nicotinate mononucleotide (NaMN) to nicotinic acid adenine dinucleotide (NaAD). This Salinispora arenicola (strain CNS-205) protein is Probable nicotinate-nucleotide adenylyltransferase.